Consider the following 179-residue polypeptide: Large ribosomal subunit protein uL6 (179 aa).

Belongs to the universal ribosomal protein uL6 family. In terms of assembly, part of the 50S ribosomal subunit.

Functionally, this protein binds to the 23S rRNA, and is important in its secondary structure. It is located near the subunit interface in the base of the L7/L12 stalk, and near the tRNA binding site of the peptidyltransferase center. This Mycobacteroides abscessus (strain ATCC 19977 / DSM 44196 / CCUG 20993 / CIP 104536 / JCM 13569 / NCTC 13031 / TMC 1543 / L948) (Mycobacterium abscessus) protein is Large ribosomal subunit protein uL6.